The primary structure comprises 60 residues: Large ribosomal subunit protein bL33 (60 aa).

The protein belongs to the bacterial ribosomal protein bL33 family.

This Chlorobium limicola (strain DSM 245 / NBRC 103803 / 6330) protein is Large ribosomal subunit protein bL33.